A 371-amino-acid chain; its full sequence is Ferrochelatase (371 aa).

The Fe cation site is built by His218 and Glu299.

The protein belongs to the ferrochelatase family.

The protein resides in the cytoplasm. It catalyses the reaction heme b + 2 H(+) = protoporphyrin IX + Fe(2+). The protein operates within porphyrin-containing compound metabolism; protoheme biosynthesis; protoheme from protoporphyrin-IX: step 1/1. Its function is as follows. Catalyzes the ferrous insertion into protoporphyrin IX. The sequence is that of Ferrochelatase from Ralstonia pickettii (strain 12J).